The primary structure comprises 1358 residues: Tenascin-R (1358 aa).

Positions 1-31 (MGADGETVVLKNMLIGINLILLGSMIKPSEC) are cleaved as a signal peptide. Residues Thr-36 and Thr-37 are each glycosylated (O-linked (GalNAc...) threonine). Residue Asn-55 is glycosylated (N-linked (GlcNAc...) asparagine). A coiled-coil region spans residues 127–157 (CASSAQVLQELLSRIEMLEREVSVLRDQCNA). Residue Ser-176 is glycosylated (O-linked (Xyl...) (chondroitin sulfate) serine). Asn-180 and Asn-198 each carry an N-linked (GlcNAc...) asparagine glycan. 3 consecutive EGF-like domains span residues 188–199 (CICNEGWFGKNC), 219–230 (CICDSEYSGDDC), and 250–261 (CVCEEPYTGEDC). O-linked (Xyl...) (chondroitin sulfate) serine glycosylation occurs at Ser-271. An N-linked (GlcNAc...) asparagine glycan is attached at Asn-278. An EGF-like 4 domain is found at 281–292 (CLCEEGYVGEDC). Intrachain disulfides connect Cys-292-Cys-301, Cys-297-Cys-312, and Cys-314-Cys-323. O-linked (Xyl...) (chondroitin sulfate) serine glycosylation occurs at Ser-302. Residues 312–323 (CVCEEGYQGPDC) form the EGF-like 5 domain. Fibronectin type-III domains are found at residues 328 to 420 (PPED…TPQG), 421 to 505 (LQFK…TVID), 506 to 595 (GPTQ…TEID), 596 to 687 (APKN…TELD), 688 to 777 (SPRD…FRPI), 778 to 865 (SHLH…TGID), 866 to 955 (PPKD…AMDN), 956 to 1042 (PVDL…TLLD), and 1043 to 1130 (PPAN…TGGR). N-linked (GlcNAc...) asparagine glycans are attached at residues Asn-392, Asn-470, and Asn-581. Ser-724 bears the Phosphoserine mark. 5 N-linked (GlcNAc...) asparagine glycosylation sites follow: Asn-791, Asn-874, Asn-1036, Asn-1046, and Asn-1261. The region spanning 1129-1344 (GRVFPHPQDC…FVEMKMRPYN (216 aa)) is the Fibrinogen C-terminal domain.

Belongs to the tenascin family. As to quaternary structure, forms oligomers. Interacts with CNTN1, TNC, and FN1. Interacts with BCAN and ACAN in a calcium-dependent manner. Interacts with SCN2B, PTPRZ1, and CSPG3. Post-translationally, contains N-linked oligosaccharides, O-linked sialylated structures and O-linked chondroitin sulfate glycosaminoglycans. Contains N-linked oligosaccharides with a sulfated carbohydrate structure. O-glycosylated on Thr-36 or Thr-37 with a core 1 or possibly core 8 glycan. Brain specific.

It is found in the secreted. It localises to the extracellular space. The protein localises to the extracellular matrix. Neural extracellular matrix (ECM) protein involved in interactions with different cells and matrix components. These interactions can influence cellular behavior by either evoking a stable adhesion and differentiation, or repulsion and inhibition of neurite growth. Binding to cell surface gangliosides inhibits RGD-dependent integrin-mediated cell adhesion and results in an inhibition of PTK2/FAK1 (FAK) phosphorylation and cell detachment. Binding to membrane surface sulfatides results in a oligodendrocyte adhesion and differentiation. Interaction with CNTN1 induces a repulsion of neurons and an inhibition of neurite outgrowth. Interacts with SCN2B may play a crucial role in clustering and regulation of activity of sodium channels at nodes of Ranvier. TNR-linked chondroitin sulfate glycosaminoglycans are involved in the interaction with FN1 and mediate inhibition of cell adhesion and neurite outgrowth. The highly regulated addition of sulfated carbohydrate structure may modulate the adhesive properties of TNR over the course of development and during synapse maintenance. The protein is Tenascin-R (TNR) of Homo sapiens (Human).